We begin with the raw amino-acid sequence, 362 residues long: Putative sphingolipid delta(4)-desaturase/C4-monooxygenase (362 aa).

Helical transmembrane passes span 45-61 (YVVS…CWLL), 71-91 (LEAY…IHDI), and 107-127 (FFGM…FKKY). The Histidine box-1 signature appears at 89–93 (HDISH). Positions 128–132 (HVEHH) match the Histidine box-2 motif. Helical transmembrane passes span 160–177 (LLWL…PLII) and 198–218 (LLIL…GTII). Positions 259-263 (HVEHH) match the Histidine box-3 motif.

Belongs to the fatty acid desaturase type 1 family. DEGS subfamily.

Its subcellular location is the membrane. The enzyme catalyses an N-acyl-15-methylhexadecasphinganine + 2 Fe(II)-[cytochrome b5] + O2 + 2 H(+) = an N-acyl-4-hydroxy-15-methylhexadecasphinganine + 2 Fe(III)-[cytochrome b5] + H2O. It carries out the reaction an N-acyl-15-methylhexadecasphinganine + 2 Fe(II)-[cytochrome b5] + O2 + 2 H(+) = an N-acyl-15-methylhexadecasphing-4-enine + 2 Fe(III)-[cytochrome b5] + 2 H2O. The catalysed reaction is a dihydroceramide + 2 Fe(II)-[cytochrome b5] + O2 + 2 H(+) = a phytoceramide + 2 Fe(III)-[cytochrome b5] + H2O. It catalyses the reaction an N-acylsphinganine + 2 Fe(II)-[cytochrome b5] + O2 + 2 H(+) = an N-acylsphing-4-enine + 2 Fe(III)-[cytochrome b5] + 2 H2O. The enzyme catalyses N-octanoylsphinganine + 2 Fe(II)-[cytochrome b5] + O2 + 2 H(+) = N-octanoyl-4-hydroxysphinganine + 2 Fe(III)-[cytochrome b5] + H2O. It carries out the reaction an N-acylsphinganine + 2 Fe(II)-[cytochrome b5] + O2 + 2 H(+) = an N-acyl-(4R)-4-hydroxysphinganine + 2 Fe(III)-[cytochrome b5] + H2O. The protein operates within lipid metabolism; sphingolipid metabolism. Its function is as follows. Bifunctional enzyme which acts both as a sphingolipid delta(4)-desaturase and a sphingolipid C4-monooxygenase. C.elegans contain specific sphingoid bases, which are unique or different in structure compared to the sphingoid bases found in other animals. Two examples of these distinctive compounds are: 15-methylhexadecasphinganine and 15-methylhexadecasphing-4-enine and this enzyme can catalyze their conversion. This Caenorhabditis elegans protein is Putative sphingolipid delta(4)-desaturase/C4-monooxygenase (ttm-5).